The following is a 343-amino-acid chain: MAPGSIASSDTSSSTSSSSTSSASSASAEGSSRPLGSEKPGLARGAVRAPRRHPPVLRMVLEALQAGERRRGTSVAAIKVYILQKYPTVDALRLNHLLKQALATGLHRGLLIRPVNSKAKGATGSFKLVPKDKRKIPPRKTAPRMPGQAEGKDPKKPSESKKDPANTVEVKKGSRKPREERAAPSKPGAAKKAPKKGTQTKDPEPRLGEAKKSSRRPDKAAQAPPSAGGPGGKSKVKERGSRQADTKAHRKTQPGSQSSKSTVTKGENGAPLAKKKMGGKVPKEAAGEGPKAKAPVPPKGAGSKKEPGPLAGKAEASKGPRKPGIPTKSSVSKAASKKAEAEG.

Positions 1–32 are enriched in low complexity; the sequence is MAPGSIASSDTSSSTSSSSTSSASSASAEGSS. Disordered stretches follow at residues 1–50 and 122–343; these read MAPG…VRAP and ATGS…EAEG. The 79-residue stretch at 52-130 folds into the H15 domain; the sequence is RHPPVLRMVL…GATGSFKLVP (79 aa). Over residues 132 to 142 the composition is skewed to basic residues; the sequence is DKRKIPPRKTA. Composition is skewed to basic and acidic residues over residues 150-183, 199-219, and 235-247; these read EGKD…ERAA, QTKD…RPDK, and KVKE…ADTK. Positions 161–176 match the Nuclear localization signal motif; that stretch reads KKDPANTVEVKKGSRK. Over residues 253–265 the composition is skewed to polar residues; it reads QPGSQSSKSTVTK.

This sequence belongs to the histone H1/H5 family. In terms of tissue distribution, oocyte (at protein level).

The protein localises to the cytoplasm. It localises to the nucleus. It is found in the chromosome. Its function is as follows. May play a key role in the control of gene expression during oogenesis and early embryogenesis, presumably through the perturbation of chromatin structure. Essential for meiotic maturation of germinal vesicle-stage oocytes. The somatic type linker histone H1c is rapidly replaced by H1oo in a donor nucleus transplanted into an oocyte. The greater mobility of H1oo as compared to H1c may contribute to this rapid replacement and increased instability of the embryonic chromatin structure. The rapid replacement of H1c with H1oo may play an important role in nuclear remodeling. In Bos taurus (Bovine), this protein is Histone H1.8.